The chain runs to 483 residues: Matrix metalloproteinase-20 (483 aa).

The signal sequence occupies residues 1-22 (MKVLPASGLAVFLIMALKFSTA). Positions 23–107 (APSLVAASPR…PRCGVPDVAN (85 aa)) are excised as a propeptide. A Cysteine switch motif is present at residues 98–105 (PRCGVPDV). Cys100 is a Zn(2+) binding site. Residues Glu164, Ala165, and Asp166 each coordinate Ca(2+). Positions 176 and 178 each coordinate Zn(2+). Ca(2+) is bound by residues Asp183, Gly184, Arg186, and Thr188. Zn(2+) is bound at residue His191. Residues Glu197, Gly198, Gly200, and Asp202 each contribute to the Ca(2+) site. His204 provides a ligand contact to Zn(2+). Positions 206 and 209 each coordinate Ca(2+). His226 contributes to the Zn(2+) binding site. Glu227 is an active-site residue. Residues His230 and His236 each coordinate Zn(2+). Hemopexin repeat units follow at residues 293–343 (PDLC…FPQL), 344–389 (MSNV…GFPR), 391–439 (VQQI…FSGV), and 440–483 (NGQI…WIGC). A disulfide bridge links Cys296 with Cys483.

It belongs to the peptidase M10A family. It depends on Zn(2+) as a cofactor. Requires Ca(2+) as cofactor. In terms of processing, autoactivates at least at the 107-Asn-|-Tyr-108 site. As to expression, expressed specifically in the enamel organ.

The protein localises to the secreted. Its subcellular location is the extracellular space. The protein resides in the extracellular matrix. Degrades amelogenin, the major protein component of the enamel matrix and two of the macromolecules characterizing the cartilage extracellular matrix: aggrecan and the cartilage oligomeric matrix protein (COMP). May play a central role in tooth enamel formation. Cleaves aggrecan at the '360-Asn-|-Phe-361' site. In Homo sapiens (Human), this protein is Matrix metalloproteinase-20 (MMP20).